A 1388-amino-acid chain; its full sequence is DNA-directed RNA polymerase subunit beta' (1388 aa).

Zn(2+) is bound by residues C65, C67, C80, and C83. Residues D456, D458, and D460 each coordinate Mg(2+). Residues C812, C887, C894, and C897 each coordinate Zn(2+).

Belongs to the RNA polymerase beta' chain family. The RNAP catalytic core consists of 2 alpha, 1 beta, 1 beta' and 1 omega subunit. When a sigma factor is associated with the core the holoenzyme is formed, which can initiate transcription. Mg(2+) is required as a cofactor. It depends on Zn(2+) as a cofactor.

It catalyses the reaction RNA(n) + a ribonucleoside 5'-triphosphate = RNA(n+1) + diphosphate. Its function is as follows. DNA-dependent RNA polymerase catalyzes the transcription of DNA into RNA using the four ribonucleoside triphosphates as substrates. The polypeptide is DNA-directed RNA polymerase subunit beta' (Protochlamydia amoebophila (strain UWE25)).